Consider the following 498-residue polypeptide: GTPase Der (498 aa).

2 EngA-type G domains span residues 3–167 (PVVA…FDDL) and 210–383 (IKLA…KSAT). Residues 9–16 (GRPNVGKS), 57–61 (DTGGI), 119–122 (NKID), 216–223 (GRPNVGKS), 263–267 (DTAGV), and 328–331 (NKWD) contribute to the GTP site. Residues 384 to 468 (TRVGTSVLTR…PIRINFQNSD (85 aa)) enclose the KH-like domain.

It belongs to the TRAFAC class TrmE-Era-EngA-EngB-Septin-like GTPase superfamily. EngA (Der) GTPase family. Associates with the 50S ribosomal subunit.

Its function is as follows. GTPase that plays an essential role in the late steps of ribosome biogenesis. The protein is GTPase Der of Vibrio campbellii (strain ATCC BAA-1116).